Reading from the N-terminus, the 192-residue chain is Protein ORF45 (192 aa).

Functionally, plays a role in the expression of ORF41, which itself is required for late gene expression. This chain is Protein ORF45, found in Autographa californica nuclear polyhedrosis virus (AcMNPV).